Here is a 628-residue protein sequence, read N- to C-terminus: Chaperone protein HtpG (628 aa).

The interval 1 to 337 (MSEKKYTFET…SADLPLNVSR (337 aa)) is a; substrate-binding. The b stretch occupies residues 338 to 554 (EILQHNKVID…DYGMSLHMQK (217 aa)). The tract at residues 555-628 (MMEEAGQSFM…FVKLVNKYIR (74 aa)) is c.

It belongs to the heat shock protein 90 family. As to quaternary structure, homodimer.

The protein resides in the cytoplasm. Its function is as follows. Molecular chaperone. Has ATPase activity. The protein is Chaperone protein HtpG of Francisella tularensis subsp. holarctica (strain FTNF002-00 / FTA).